A 690-amino-acid polypeptide reads, in one-letter code: BURP domain-containing protein 14 (690 aa).

A signal peptide spans 1–26 (MAPPRHARLVAATIAVLLCHLPRSAA). The tract at residues 134-163 (GSSWSKSSSDGDGAAAAAAPAGGGGGGGGG) is disordered. The segment covering 135 to 153 (SSWSKSSSDGDGAAAAAAP) has biased composition (low complexity). Positions 154–163 (AGGGGGGGGG) are enriched in gly residues. N-linked (GlcNAc...) asparagine glycosylation is present at Asn178. Over residues 201-211 (SNGGGGGGGGV) the composition is skewed to gly residues. Positions 201–232 (SNGGGGGGGGVDSFRRYGKGSQGRNDSFTSYE) are disordered. Asn225, Asn317, Asn379, Asn432, Asn450, and Asn601 each carry an N-linked (GlcNAc...) asparagine glycan. The region spanning 477 to 689 (FFRERDLVAG…FQGDMTWTVA (213 aa)) is the BURP domain.

In terms of tissue distribution, expressed in panicles.

This chain is BURP domain-containing protein 14 (BURP14), found in Oryza sativa subsp. japonica (Rice).